A 544-amino-acid chain; its full sequence is CTP synthase (544 aa).

Residues 1-266 are amidoligase domain; sequence MKKRFIFITG…DQIICHHFKL (266 aa). A CTP-binding site is contributed by Ser14. Ser14 provides a ligand contact to UTP. ATP is bound by residues 15-20 and Asp72; that span reads SLGKGI. Mg(2+) is bound by residues Asp72 and Glu140. Residues 147 to 149, 187 to 192, and Lys223 contribute to the CTP site; these read DIE and KTKPTQ. UTP contacts are provided by residues 187–192 and Lys223; that span reads KTKPTQ. The region spanning 291–541 is the Glutamine amidotransferase type-1 domain; that stretch reads TIGIIGKYIK…IKAAIQYKKI (251 aa). L-glutamine is bound at residue Gly352. Cys379 (nucleophile; for glutamine hydrolysis) is an active-site residue. Residues 380-383, Glu403, and Arg469 each bind L-glutamine; that span reads LGMQ. Residues His514 and Glu516 contribute to the active site.

This sequence belongs to the CTP synthase family. In terms of assembly, homotetramer.

It catalyses the reaction UTP + L-glutamine + ATP + H2O = CTP + L-glutamate + ADP + phosphate + 2 H(+). The catalysed reaction is L-glutamine + H2O = L-glutamate + NH4(+). The enzyme catalyses UTP + NH4(+) + ATP = CTP + ADP + phosphate + 2 H(+). The protein operates within pyrimidine metabolism; CTP biosynthesis via de novo pathway; CTP from UDP: step 2/2. With respect to regulation, allosterically activated by GTP, when glutamine is the substrate; GTP has no effect on the reaction when ammonia is the substrate. The allosteric effector GTP functions by stabilizing the protein conformation that binds the tetrahedral intermediate(s) formed during glutamine hydrolysis. Inhibited by the product CTP, via allosteric rather than competitive inhibition. In terms of biological role, catalyzes the ATP-dependent amination of UTP to CTP with either L-glutamine or ammonia as the source of nitrogen. Regulates intracellular CTP levels through interactions with the four ribonucleotide triphosphates. The sequence is that of CTP synthase from Buchnera aphidicola subsp. Baizongia pistaciae (strain Bp).